The chain runs to 421 residues: 3-isopropylmalate dehydratase large subunit (421 aa).

Positions 302, 362, and 365 each coordinate [4Fe-4S] cluster.

It belongs to the aconitase/IPM isomerase family. LeuC type 2 subfamily. Heterodimer of LeuC and LeuD. [4Fe-4S] cluster is required as a cofactor.

The catalysed reaction is (2R,3S)-3-isopropylmalate = (2S)-2-isopropylmalate. The protein operates within amino-acid biosynthesis; L-leucine biosynthesis; L-leucine from 3-methyl-2-oxobutanoate: step 2/4. Functionally, catalyzes the isomerization between 2-isopropylmalate and 3-isopropylmalate, via the formation of 2-isopropylmaleate. This is 3-isopropylmalate dehydratase large subunit from Campylobacter curvus (strain 525.92).